Reading from the N-terminus, the 311-residue chain is MSVIRRLAAVLRQSDSGISAFLVTAPRKYKVYKIPKRTTGFRVIAQPAKGLKDIQRAFVQLYNFPVHDASMAYMKGKGIRDNAAAHAGNQYLLKADLEDFFNSITPAIFWRCIEMSSALTPQFEPQDKFFIEKILFWQPIKHRKTKLILSVGAPSSPVISNFCMYEFDNRIHAACNKLEITYTRYADDLTFSCNIPNVLKAVPSTIEALLKDLFGSELRLNHSKTVFSSKAHNRHVTGVTINNEETLSLGRDRKRFIKHLINQYKYGLLDNEDKAYLTGLLAFASHIEPGFITRMNEKYSLELMGRLRGQR.

The Reverse transcriptase domain occupies 15–241; it reads DSGISAFLVT…HNRHVTGVTI (227 aa). The Mg(2+) site is built by aspartate 96, aspartate 187, and aspartate 188.

This sequence belongs to the bacterial reverse transcriptase family.

It catalyses the reaction DNA(n) + a 2'-deoxyribonucleoside 5'-triphosphate = DNA(n+1) + diphosphate. Reverse transcriptase (RT) component of antiviral defense system retron Ec78, composed of a non-coding RNA (ncRNA), this reverse transcriptase (RT), a probable ATPase and a putative HNH endonuclease. Expression of retron Ec78 confers protection against bacteriophage T5. At multiplicity of infection (MOI) of 0.02 cultures slow growth when infected with T5 but do not collapse, at MOI 2 cultures enter growth stasis. Responsible for synthesis of msDNA-Ec78 (a linear ssDNA with a 5'-terminal phosphate residue). Unlike most known msDNAs the mature product does not have an RNA component. The retron transcript serves as primer and template for the reaction, and codes for the RT. Not mutagenic when cloned in E.coli. It is thought to be synthesized as a branched RNA with a 2',5'-phosphodiester linkage to ssDNA; the linkage is cleaved endonucleolytically by ExoVII (xseA-xseB) leaving the observed mature 5'-ssDNA terminus. Overexpression of the ncRNA and RT, which leads to increased levels of msDNA, is not mutagenic in vivo. As the stem in the msDNA does not have a mismatch it probably does not bind or sequester MutS and/or MutL. This is Retron Ec78 reverse transcriptase from Escherichia coli.